Reading from the N-terminus, the 429-residue chain is Ribosomal RNA small subunit methyltransferase B (429 aa).

Residues 254–260 (CAAPGGK), D277, D303, and D322 contribute to the S-adenosyl-L-methionine site. C375 acts as the Nucleophile in catalysis.

The protein belongs to the class I-like SAM-binding methyltransferase superfamily. RsmB/NOP family.

The protein resides in the cytoplasm. It catalyses the reaction cytidine(967) in 16S rRNA + S-adenosyl-L-methionine = 5-methylcytidine(967) in 16S rRNA + S-adenosyl-L-homocysteine + H(+). In terms of biological role, specifically methylates the cytosine at position 967 (m5C967) of 16S rRNA. In Pectobacterium atrosepticum (strain SCRI 1043 / ATCC BAA-672) (Erwinia carotovora subsp. atroseptica), this protein is Ribosomal RNA small subunit methyltransferase B.